The sequence spans 261 residues: NAD(P)H-quinone oxidoreductase subunit K, chloroplastic (261 aa).

The [4Fe-4S] cluster site is built by Cys43, Cys44, Cys108, and Cys139.

This sequence belongs to the complex I 20 kDa subunit family. As to quaternary structure, NDH is composed of at least 16 different subunits, 5 of which are encoded in the nucleus. It depends on [4Fe-4S] cluster as a cofactor.

It is found in the plastid. The protein resides in the chloroplast thylakoid membrane. The enzyme catalyses a plastoquinone + NADH + (n+1) H(+)(in) = a plastoquinol + NAD(+) + n H(+)(out). The catalysed reaction is a plastoquinone + NADPH + (n+1) H(+)(in) = a plastoquinol + NADP(+) + n H(+)(out). NDH shuttles electrons from NAD(P)H:plastoquinone, via FMN and iron-sulfur (Fe-S) centers, to quinones in the photosynthetic chain and possibly in a chloroplast respiratory chain. The immediate electron acceptor for the enzyme in this species is believed to be plastoquinone. Couples the redox reaction to proton translocation, and thus conserves the redox energy in a proton gradient. The chain is NAD(P)H-quinone oxidoreductase subunit K, chloroplastic from Cycas taitungensis (Prince sago).